Consider the following 964-residue polypeptide: Integrator complex subunit 7 (964 aa).

Low complexity predominate over residues 937–958 (QQLRHQLQQQQQNVPQPAAQRN). Residues 937 to 964 (QQLRHQLQQQQQNVPQPAAQRNISTRFQ) form a disordered region.

Belongs to the Integrator subunit 7 family. In terms of assembly, component of the Integrator complex, composed of core subunits INTS1, INTS2, INTS3, INTS4, INTS5, INTS6, INTS7, INTS8, INTS9/RC74, INTS10, INTS11/CPSF3L, INTS12, INTS13, INTS14 and INTS15. The core complex associates with protein phosphatase 2A subunits PPP2CA and PPP2R1A, to form the Integrator-PP2A (INTAC) complex.

The protein resides in the nucleus. The protein localises to the chromosome. Its subcellular location is the cytoplasm. Functionally, component of the integrator complex, a multiprotein complex that terminates RNA polymerase II (Pol II) transcription in the promoter-proximal region of genes. The integrator complex provides a quality checkpoint during transcription elongation by driving premature transcription termination of transcripts that are unfavorably configured for transcriptional elongation: the complex terminates transcription by (1) catalyzing dephosphorylation of the C-terminal domain (CTD) of Pol II subunit POLR2A/RPB1 and SUPT5H/SPT5, (2) degrading the exiting nascent RNA transcript via endonuclease activity and (3) promoting the release of Pol II from bound DNA. The integrator complex is also involved in terminating the synthesis of non-coding Pol II transcripts, such as enhancer RNAs (eRNAs), small nuclear RNAs (snRNAs), telomerase RNAs and long non-coding RNAs (lncRNAs). Essential during embryogenesis for eye development. The protein is Integrator complex subunit 7 (ints7) of Danio rerio (Zebrafish).